The primary structure comprises 77 residues: Translational regulator CsrA (77 aa).

The protein belongs to the CsrA/RsmA family. In terms of assembly, homodimer; the beta-strands of each monomer intercalate to form a hydrophobic core, while the alpha-helices form wings that extend away from the core.

The protein localises to the cytoplasm. Its function is as follows. A translational regulator that binds mRNA to regulate translation initiation and/or mRNA stability. Usually binds in the 5'-UTR at or near the Shine-Dalgarno sequence preventing ribosome-binding, thus repressing translation. Its main target seems to be the major flagellin gene, while its function is anatagonized by FliW. This Desulfitobacterium hafniense (strain Y51) protein is Translational regulator CsrA.